We begin with the raw amino-acid sequence, 327 residues long: Mitochondrial carnitine carrier (327 aa).

Residues Met-1–Ser-11 are compositionally biased toward low complexity. The tract at residues Met-1–Ser-29 is disordered. 6 consecutive transmembrane segments (helical) span residues Arg-33–Ala-49, Leu-107–Gly-123, Met-141–Thr-162, Gly-196–Phe-212, Leu-244–Ile-260, and Phe-293–Leu-313. 3 Solcar repeats span residues Arg-33 to Leu-126, Leu-139 to Tyr-221, and Val-237 to Leu-321.

This sequence belongs to the mitochondrial carrier (TC 2.A.29) family.

The protein localises to the mitochondrion inner membrane. Transports carnitine, acetylcarnitine, propionylcarnitine and to a much lower extent medium- and long-chain acylcarnitines. The polypeptide is Mitochondrial carnitine carrier (CRC1) (Saccharomyces cerevisiae (strain ATCC 204508 / S288c) (Baker's yeast)).